The sequence spans 247 residues: Anionic trypsin (247 aa).

Residues 1 to 15 (MHPLLILAFVGAAVA) form the signal peptide. Residues 16–23 (FPSDDDDK) constitute a propeptide, activation peptide. Positions 24–244 (IVGGYTCAEN…YVDWIQETIA (221 aa)) constitute a Peptidase S1 domain. Cystine bridges form between Cys-30-Cys-160, Cys-48-Cys-64, Cys-132-Cys-233, Cys-139-Cys-206, Cys-171-Cys-185, and Cys-196-Cys-220. The active-site Charge relay system is His-63. Glu-75, Asn-77, Val-80, and Glu-85 together coordinate Ca(2+). Asp-107 (charge relay system) is an active-site residue. Ser-200 acts as the Charge relay system in catalysis.

The protein belongs to the peptidase S1 family. The cofactor is Ca(2+). Post-translationally, not sulfated on tyrosine residue(s).

It localises to the secreted. Its subcellular location is the extracellular space. The catalysed reaction is Preferential cleavage: Arg-|-Xaa, Lys-|-Xaa.. The sequence is that of Anionic trypsin from Bos taurus (Bovine).